A 427-amino-acid chain; its full sequence is Enolase (427 aa).

Residue Gln-163 participates in (2R)-2-phosphoglycerate binding. Catalysis depends on Glu-205, which acts as the Proton donor. Asp-242, Glu-285, and Asp-312 together coordinate Mg(2+). (2R)-2-phosphoglycerate contacts are provided by Lys-337, Arg-366, Ser-367, and Lys-388. The active-site Proton acceptor is the Lys-337.

Belongs to the enolase family. Mg(2+) serves as cofactor.

It is found in the cytoplasm. The protein localises to the secreted. The protein resides in the cell surface. The catalysed reaction is (2R)-2-phosphoglycerate = phosphoenolpyruvate + H2O. The protein operates within carbohydrate degradation; glycolysis; pyruvate from D-glyceraldehyde 3-phosphate: step 4/5. Its function is as follows. Catalyzes the reversible conversion of 2-phosphoglycerate (2-PG) into phosphoenolpyruvate (PEP). It is essential for the degradation of carbohydrates via glycolysis. In Polaromonas sp. (strain JS666 / ATCC BAA-500), this protein is Enolase.